The chain runs to 346 residues: Elongation factor Ts (346 aa).

The involved in Mg(2+) ion dislocation from EF-Tu stretch occupies residues T80–V83.

Belongs to the EF-Ts family.

It is found in the cytoplasm. In terms of biological role, associates with the EF-Tu.GDP complex and induces the exchange of GDP to GTP. It remains bound to the aminoacyl-tRNA.EF-Tu.GTP complex up to the GTP hydrolysis stage on the ribosome. This chain is Elongation factor Ts, found in Streptococcus pneumoniae (strain 70585).